The primary structure comprises 179 residues: NAD(P)H-quinone oxidoreductase subunit J (179 aa).

It belongs to the complex I 30 kDa subunit family. NDH-1 can be composed of about 15 different subunits; different subcomplexes with different compositions have been identified which probably have different functions. In at one experiment the initiator methionine has been seen to be kept and removed.

It is found in the cellular thylakoid membrane. The catalysed reaction is a plastoquinone + NADH + (n+1) H(+)(in) = a plastoquinol + NAD(+) + n H(+)(out). The enzyme catalyses a plastoquinone + NADPH + (n+1) H(+)(in) = a plastoquinol + NADP(+) + n H(+)(out). In terms of biological role, NDH-1 shuttles electrons from an unknown electron donor, via FMN and iron-sulfur (Fe-S) centers, to quinones in the respiratory and/or the photosynthetic chain. The immediate electron acceptor for the enzyme in this species is believed to be plastoquinone. Couples the redox reaction to proton translocation, and thus conserves the redox energy in a proton gradient. Cyanobacterial NDH-1 also plays a role in inorganic carbon-concentration. This Synechocystis sp. (strain ATCC 27184 / PCC 6803 / Kazusa) protein is NAD(P)H-quinone oxidoreductase subunit J.